Reading from the N-terminus, the 348-residue chain is Nuclear receptor subfamily 1 group I member 3 (348 aa).

The nuclear receptor DNA-binding region spans 8–83 (LRNCVVCGDQ…AGMRKDMILS (76 aa)). The segment at 11 to 31 (CVVCGDQATGYHFNALTCEGC) adopts an NR C4-type zinc-finger fold. Residue Thr-38 is modified to Phosphothreonine; by PKC. The segment at 47–71 (CPFAGSCEVSKTQRRHCPACRLQKC) adopts an NR C4-type zinc-finger fold. The 240-residue stretch at 109-348 (EQEELIRTLL…MMPLLQEICS (240 aa)) folds into the NR LBD domain.

Belongs to the nuclear hormone receptor family. NR1 subfamily. Heterodimer of NR1I3 and RXR. Interacts with PSMC4. Interacts with ECT2. Directly interacts with DNAJC7; this complex may also include HSP90. Interacts with CRY1. Interacts with CRY2 in a ligand-dependent manner. Phosphorylated at Thr-38 by PKC, dephosphorylation of Thr-38 is required for nuclear translocation and activation.

Its subcellular location is the nucleus. It localises to the cytoplasm. It is found in the cytoskeleton. Binds and transactivates the retinoic acid response elements that control expression of the retinoic acid receptor beta 2 and alcohol dehydrogenase 3 genes. Transactivates both the phenobarbital responsive element module of the human CYP2B6 gene and the CYP3A4 xenobiotic response element. In Pan troglodytes (Chimpanzee), this protein is Nuclear receptor subfamily 1 group I member 3 (NR1I3).